Consider the following 562-residue polypeptide: Septation ring formation regulator EzrA (562 aa).

Residues 1 to 2 (ME) lie on the Extracellular side of the membrane. A helical transmembrane segment spans residues 3 to 21 (FVIGLLIVLLALFAAGYFF). The Cytoplasmic portion of the chain corresponds to 22 to 562 (RKKIYAEIDR…VEKIKADISA (541 aa)). 2 coiled-coil regions span residues 377 to 425 (YSLL…LKKT) and 470 to 497 (MEEAGAHLKQAEDIVNRASRESEELVEQ).

It belongs to the EzrA family. Post-translationally, may be degraded by FtsH protease.

The protein localises to the cell membrane. The protein resides in the membrane raft. Negative regulator of FtsZ ring formation; modulates the frequency and position of FtsZ ring formation. Inhibits FtsZ ring formation at polar sites. Interacts either with FtsZ or with one of its binding partners to promote depolymerization. This Bacillus subtilis (strain 168) protein is Septation ring formation regulator EzrA.